The primary structure comprises 140 residues: Putative pre-16S rRNA nuclease (140 aa).

This sequence belongs to the YqgF nuclease family.

The protein resides in the cytoplasm. Could be a nuclease involved in processing of the 5'-end of pre-16S rRNA. This chain is Putative pre-16S rRNA nuclease, found in Actinobacillus succinogenes (strain ATCC 55618 / DSM 22257 / CCUG 43843 / 130Z).